The following is a 531-amino-acid chain: Cytochrome c oxidase subunit 1 (531 aa).

A helical membrane pass occupies residues 18 to 38 (ILYLIYGMVSAMVATGMSVII). Positions 41 and 46 each coordinate Ca(2+). 6 consecutive transmembrane segments (helical) span residues 59–79 (VLVT…ILIG), 103–123 (ISFW…LIET), 149–169 (AIFA…NFIV), 185–205 (PLFV…LPVL), 237–257 (LFYF…FGII), and 269–289 (IFGQ…GFLV). Histidine 64 provides a ligand contact to Fe(II)-heme a. Histidine 243 contributes to the Cu cation binding site. Residues 243–247 (HPEVY) constitute a cross-link (1'-histidyl-3'-tyrosine (His-Tyr)). Tyrosine 247 is a binding site for O2. Histidine 292 and histidine 293 together coordinate Cu cation. The next 2 membrane-spanning stretches (helical) occupy residues 312–332 (MVIA…LYGG) and 340–360 (MLFA…GVML). Mg(2+) contacts are provided by histidine 370 and aspartate 371. Histidine 378 is a binding site for heme a3. Histidine 380 is a binding site for Fe(II)-heme a. The next 2 helical transmembrane spans lie at 385–405 (MGAL…MFGL) and 414–434 (VHYW…HFLG). Proline 443 provides a ligand contact to Ca(2+). Residues 458-478 (WGSIMSVISVLIGLYSVLVQL) form a helical membrane-spanning segment.

This sequence belongs to the heme-copper respiratory oxidase family. In terms of assembly, component of the cytochrome c oxidase (complex IV, CIV), a multisubunit enzyme composed of a catalytic core of 3 subunits and several supernumerary subunits. The complex exists as a monomer or a dimer and forms supercomplexes (SCs) in the inner mitochondrial membrane with ubiquinol-cytochrome c oxidoreductase (cytochrome b-c1 complex, complex III, CIII). The cofactor is heme. Cu cation is required as a cofactor.

Its subcellular location is the mitochondrion inner membrane. It catalyses the reaction 4 Fe(II)-[cytochrome c] + O2 + 8 H(+)(in) = 4 Fe(III)-[cytochrome c] + 2 H2O + 4 H(+)(out). It participates in energy metabolism; oxidative phosphorylation. Component of the cytochrome c oxidase, the last enzyme in the mitochondrial electron transport chain which drives oxidative phosphorylation. The respiratory chain contains 3 multisubunit complexes succinate dehydrogenase (complex II, CII), ubiquinol-cytochrome c oxidoreductase (cytochrome b-c1 complex, complex III, CIII) and cytochrome c oxidase (complex IV, CIV), that cooperate to transfer electrons derived from NADH and succinate to molecular oxygen, creating an electrochemical gradient over the inner membrane that drives transmembrane transport and the ATP synthase. Cytochrome c oxidase is the component of the respiratory chain that catalyzes the reduction of oxygen to water. Electrons originating from reduced cytochrome c in the intermembrane space (IMS) are transferred via the dinuclear copper A center (CU(A)) of subunit 2 and heme A of subunit 1 to the active site in subunit 1, a binuclear center (BNC) formed by heme A3 and copper B (CU(B)). The BNC reduces molecular oxygen to 2 water molecules using 4 electrons from cytochrome c in the IMS and 4 protons from the mitochondrial matrix. This Candida albicans (strain SC5314 / ATCC MYA-2876) (Yeast) protein is Cytochrome c oxidase subunit 1 (COX1).